Here is a 949-residue protein sequence, read N- to C-terminus: Glycine dehydrogenase (decarboxylating) (949 aa).

Residue K704 is modified to N6-(pyridoxal phosphate)lysine.

This sequence belongs to the GcvP family. The glycine cleavage system is composed of four proteins: P, T, L and H. It depends on pyridoxal 5'-phosphate as a cofactor.

It carries out the reaction N(6)-[(R)-lipoyl]-L-lysyl-[glycine-cleavage complex H protein] + glycine + H(+) = N(6)-[(R)-S(8)-aminomethyldihydrolipoyl]-L-lysyl-[glycine-cleavage complex H protein] + CO2. Functionally, the glycine cleavage system catalyzes the degradation of glycine. The P protein binds the alpha-amino group of glycine through its pyridoxal phosphate cofactor; CO(2) is released and the remaining methylamine moiety is then transferred to the lipoamide cofactor of the H protein. The chain is Glycine dehydrogenase (decarboxylating) from Bacteroides thetaiotaomicron (strain ATCC 29148 / DSM 2079 / JCM 5827 / CCUG 10774 / NCTC 10582 / VPI-5482 / E50).